The primary structure comprises 468 residues: MYDELPPELWVKIVDYSGEIALLLTNTSFFELVSLINIKTDIIEYIVDNNLLDVLKYFVVLKNLKHNLIDGKIITLKSLNENLVKNCEKGNIEIIKYLLDIGADIEGKDNCAVLTASHHGHIEVVKYLVCKGANFRANNDKAVRWASDKGHLDVVKYLVSQGSDIRSENDCSICWASGNGHLEMVKYLVSQGVNIRTNDDWAIRLASENGHLEVVKYLVSQGADIRSQDDHAIKWASGNGHLEMVKYLVSQSSNIIAEDNYAVRWASENGHLEVIKYLVSQGSNITSNYYTIIAASKNGHIDIVKYLVSQGVNIRDCDSSAVQIASENGHLEVVKYLVSQGIDFREHDDLTFDMALRKGHVEIVKYLVGQGVDFRVYDDYPVRMASHCGRLGVVKYFVSQGADVRAEDDYAVRMSAEKGHIEVVKFLVDNGANIRADNDYAVRLASENGHIKIVEYLVSMGAVLNKKN.

14 ANK repeats span residues 38-68 (IKTDIIEYIVDNNLLDVLKYFVVLKNLKHNL), 78-107 (SLNENLVKNCEKGNIEIIKYLLDIGADIEG), 109-137 (DNCAVLTASHHGHIEVVKYLVCKGANFRA), 138-167 (NNDKAVRWASDKGHLDVVKYLVSQGSDIRS), 169-197 (NDCSICWASGNGHLEMVKYLVSQGVNIRT), 198-227 (NDDWAIRLASENGHLEVVKYLVSQGADIRS), 229-257 (DDHAIKWASGNGHLEMVKYLVSQSSNIIA), 258-287 (EDNYAVRWASENGHLEVIKYLVSQGSNITS), 289-316 (YYTIIAASKNGHIDIVKYLVSQGVNIRD), 317-346 (CDSSAVQIASENGHLEVVKYLVSQGIDFRE), 348-376 (DDLTFDMALRKGHVEIVKYLVGQGVDFRV), 378-406 (DDYPVRMASHCGRLGVVKYFVSQGADVRA), 407-436 (EDDYAVRMSAEKGHIEVVKFLVDNGANIRA), and 438-466 (NDYAVRLASENGHIKIVEYLVSMGAVLNK).

This Acanthamoeba polyphaga mimivirus (APMV) protein is Putative ankyrin repeat protein R873.